Reading from the N-terminus, the 103-residue chain is MYAVFQSGGKQHRVSEGQTVRLEKLDIATGEAVEFAEVLMIANGEEIKIGVPFVEGGVIKAEVVAHGRGEKVKIVKFRRRKHYRKQQGHRQWFTDVKITGISA.

It belongs to the bacterial ribosomal protein bL21 family. In terms of assembly, part of the 50S ribosomal subunit. Contacts protein L20.

Its function is as follows. This protein binds to 23S rRNA in the presence of protein L20. The sequence is that of Large ribosomal subunit protein bL21 from Klebsiella pneumoniae (strain 342).